The primary structure comprises 238 residues: Cysteine-rich venom protein (238 aa).

A signal peptide spans 1-19 (MIAFIVLLSLAAVLQQSSG). Positions 38-164 (VDKHNALRRS…STKYLYVCQY (127 aa)) constitute an SCP domain. 8 cysteine pairs are disulfide-bonded: C75/C153, C92/C165, C148/C162, C184/C191, C187/C196, C200/C233, C209/C227, and C218/C231. The 34-residue stretch at 200 to 233 (CKYEDAFTNCNELAKETKCKTEWIKSKCPATCFC) folds into the ShKT domain.

This sequence belongs to the CRISP family. As to expression, expressed by the venom gland.

The protein localises to the secreted. Functionally, blocks olfactory (CNGA2) and retinal (CNGA1) CNG channel currents. Does not affect neither depolarization- nor caffeine-induced contraction of smooth muscle. The sequence is that of Cysteine-rich venom protein from Drysdalia coronoides (White-lipped snake).